Here is a 504-residue protein sequence, read N- to C-terminus: Peptidyl-prolyl cis-trans isomerase-like 4 (504 aa).

In terms of domain architecture, PPIase cyclophilin-type spans 1–169; that stretch reads MSVMLETSLG…QNIRIRHVEI (169 aa). In terms of domain architecture, RRM spans 246–324; that stretch reads NILFVCKLNP…RRIWVDFSQS (79 aa). The segment covering 330-339 has biased composition (polar residues); the sequence is RSMLSSSNPT. Residues 330–504 form a disordered region; it reads RSMLSSSNPT…RERDDRDRRR (175 aa). The span at 340 to 354 shows a compositional bias: gly residues; sequence GRGGRGGRGGRGGNY. Composition is skewed to basic and acidic residues over residues 356–381 and 416–504; these read GRRD…DSRR and SKRD…DRRR.

It belongs to the cyclophilin-type PPIase family. PPIL4 subfamily.

The protein localises to the nucleus. The catalysed reaction is [protein]-peptidylproline (omega=180) = [protein]-peptidylproline (omega=0). Functionally, PPIases accelerate the folding of proteins. It catalyzes the cis-trans isomerization of proline imidic peptide bonds in oligopeptides. The protein is Peptidyl-prolyl cis-trans isomerase-like 4 (CYP6) of Cryptococcus neoformans var. neoformans serotype D (strain B-3501A) (Filobasidiella neoformans).